Here is a 421-residue protein sequence, read N- to C-terminus: MFNITISKILARQILDSRGYPTIEVETILSNDIKAKACVPSGASVGKFEAVELRDNDKNFYNGYGVTKAINLINSEVAPQIISMNTLNQEKIDNALIEIDGTDNKSRIGANSTLAISLAIAKAAALALNIPLYQYLGGITAKVLPTPLINVINGGMHADNNLDFQEFMIIPNGANKFEDAIRMSAEVFFQLKQILKHKKLNTNVGDEGGFAPNIRINTEVFEIIIDAVEKSGYKMYEDFSLGLDIAASTFYKDQKYKFADYELNTQELVEYYKKIISQYPIISIEDPIAEEDINGWKLITQELGNKIQIVGDDLFVTNCKLIQNGIDNNMANAVLIKPNQIGTLTETFNAIRLAQKNNYNVIISHRSGETEDTTISHIAVATNCGQIKTGSLSRSERLAKYNELLYIEKLLGISAIYYGSL.

Gln-165 serves as a coordination point for (2R)-2-phosphoglycerate. The active-site Proton donor is Glu-207. The Mg(2+) site is built by Asp-244, Glu-285, and Asp-312. The (2R)-2-phosphoglycerate site is built by Lys-337, Arg-366, Ser-367, and Lys-388. The active-site Proton acceptor is Lys-337.

This sequence belongs to the enolase family. Mg(2+) serves as cofactor.

The protein resides in the cytoplasm. It localises to the secreted. Its subcellular location is the cell surface. The catalysed reaction is (2R)-2-phosphoglycerate = phosphoenolpyruvate + H2O. It functions in the pathway carbohydrate degradation; glycolysis; pyruvate from D-glyceraldehyde 3-phosphate: step 4/5. Its function is as follows. Catalyzes the reversible conversion of 2-phosphoglycerate (2-PG) into phosphoenolpyruvate (PEP). It is essential for the degradation of carbohydrates via glycolysis. This chain is Enolase, found in Ehrlichia chaffeensis (strain ATCC CRL-10679 / Arkansas).